A 198-amino-acid polypeptide reads, in one-letter code: 5'-deoxynucleotidase hdd1 (198 aa).

The 107-residue stretch at 38-144 (IADHMYRMGI…VKDIDKFEMI (107 aa)) folds into the HD domain. Residues His-41, His-69, Asp-70, Glu-73, Asp-78, Ile-79, and Asp-139 each coordinate a divalent metal cation.

Belongs to the HDDC2 family. In terms of assembly, homodimer. Requires Mn(2+) as cofactor. Co(2+) is required as a cofactor. It depends on Mg(2+) as a cofactor.

It is found in the cytoplasm. The protein resides in the nucleus. The catalysed reaction is a 2'-deoxyribonucleoside 5'-phosphate + H2O = a 2'-deoxyribonucleoside + phosphate. Functionally, catalyzes the dephosphorylation of the nucleoside 5'-monophosphates deoxyadenosine monophosphate (dAMP), deoxycytidine monophosphate (dCMP), deoxyguanosine monophosphate (dGMP) and deoxythymidine monophosphate (dTMP). The chain is 5'-deoxynucleotidase hdd1 from Schizosaccharomyces pombe (strain 972 / ATCC 24843) (Fission yeast).